Here is a 127-residue protein sequence, read N- to C-terminus: Small ribosomal subunit protein uS11 (127 aa).

This sequence belongs to the universal ribosomal protein uS11 family. As to quaternary structure, part of the 30S ribosomal subunit. Interacts with proteins S7 and S18. Binds to IF-3.

Located on the platform of the 30S subunit, it bridges several disparate RNA helices of the 16S rRNA. Forms part of the Shine-Dalgarno cleft in the 70S ribosome. In Streptococcus suis (strain 98HAH33), this protein is Small ribosomal subunit protein uS11.